The following is a 1188-amino-acid chain: uncharacterized protein (1188 aa).

Disordered stretches follow at residues 126-468 (GDLR…SQME), 484-771 (EDRF…LYKP), 790-823 (ARGGAAGPGEPVEVKEPPGLPAKPPASAQPTDEL), and 847-1039 (QRAQ…FSRF). Composition is skewed to pro residues over residues 139-151 (IPPPPPGPAPGPP), 159-193 (GGSPLPSPPSTAPPPPPLLLEPPPPPSMAPPPPPV), and 208-240 (IPTPPDFIPPAPPLAFLAPPPPPVPAPAPPAPA). S260 is modified (phosphoserine). Over residues 322–331 (EAPRKEEGAT) the composition is skewed to basic and acidic residues. Residues 389-418 (TPPPAPPLPPPAPPLPPPAPPLPPAAPPLP) are compositionally biased toward pro residues. Residues 432-441 (KTPKSSSPAL) show a composition bias toward low complexity. 2 stretches are compositionally biased toward basic and acidic residues: residues 501–514 (KEGKKGPRLPEKET) and 566–583 (IRNELEARLSSAAEKEAK). A compositionally biased stretch (low complexity) spans 618–633 (LPPQSTTLLPTTSLQP). Residues 640–652 (AIPPKATPEPAIP) are compositionally biased toward pro residues. T666 is modified (phosphothreonine). Residues 689–703 (PAIASTATTLPTTTS) are compositionally biased toward low complexity. Residues 875-893 (AEASSDSIFHSQGTPNSFT) are compositionally biased toward polar residues. Residues 920–931 (LGRDAEGTELSR) show a composition bias toward basic and acidic residues. Pro residues predominate over residues 986–1001 (IPPPPEFSNDPEPPAP). The span at 1007–1019 (GRQSSPPRNNYSD) shows a compositional bias: polar residues. Over residues 1026 to 1035 (AGPGAPPALG) the composition is skewed to low complexity. R1044 is subject to Asymmetric dimethylarginine. Residues 1069 to 1160 (GEPHRGPGLP…SPYTTTRYGS (92 aa)) are disordered. Residues R1073 and R1084 each carry the omega-N-methylarginine modification. Asymmetric dimethylarginine is present on R1157.

This is an uncharacterized protein from Homo sapiens (Human).